The following is a 506-amino-acid chain: Kynurenine 3-monooxygenase (506 aa).

Residues 153–175 (QETSLLPGEESEKDKKQNTEDED) are disordered. Positions 162–171 (ESEKDKKQNT) are enriched in basic and acidic residues.

The protein belongs to the aromatic-ring hydroxylase family. KMO subfamily. FAD serves as cofactor.

It localises to the mitochondrion outer membrane. It carries out the reaction L-kynurenine + NADPH + O2 + H(+) = 3-hydroxy-L-kynurenine + NADP(+) + H2O. Its pathway is cofactor biosynthesis; NAD(+) biosynthesis; quinolinate from L-kynurenine: step 1/3. In terms of biological role, catalyzes the hydroxylation of L-kynurenine (L-Kyn) to form 3-hydroxy-L-kynurenine (L-3OHKyn). Required for synthesis of quinolinic acid. In Cryptococcus neoformans var. neoformans serotype D (strain B-3501A) (Filobasidiella neoformans), this protein is Kynurenine 3-monooxygenase.